A 47-amino-acid polypeptide reads, in one-letter code: Large ribosomal subunit protein bL34 (47 aa).

Residues 1–28 (MAKGKRTFQPNNRRRARVHGFRTRMRTR) form a disordered region.

Belongs to the bacterial ribosomal protein bL34 family.

The polypeptide is Large ribosomal subunit protein bL34 (Corynebacterium efficiens (strain DSM 44549 / YS-314 / AJ 12310 / JCM 11189 / NBRC 100395)).